The sequence spans 630 residues: 1-deoxy-D-xylulose-5-phosphate synthase (630 aa).

Thiamine diphosphate is bound by residues His-87 and 128-130 (GHS). Asp-159 serves as a coordination point for Mg(2+). Residues 160-161 (GA), Asn-188, Phe-295, and Glu-377 contribute to the thiamine diphosphate site. Asn-188 provides a ligand contact to Mg(2+).

This sequence belongs to the transketolase family. DXPS subfamily. Homodimer. Mg(2+) serves as cofactor. The cofactor is thiamine diphosphate.

The enzyme catalyses D-glyceraldehyde 3-phosphate + pyruvate + H(+) = 1-deoxy-D-xylulose 5-phosphate + CO2. It functions in the pathway metabolic intermediate biosynthesis; 1-deoxy-D-xylulose 5-phosphate biosynthesis; 1-deoxy-D-xylulose 5-phosphate from D-glyceraldehyde 3-phosphate and pyruvate: step 1/1. Its function is as follows. Catalyzes the acyloin condensation reaction between C atoms 2 and 3 of pyruvate and glyceraldehyde 3-phosphate to yield 1-deoxy-D-xylulose-5-phosphate (DXP). This chain is 1-deoxy-D-xylulose-5-phosphate synthase, found in Pseudomonas syringae pv. syringae (strain B728a).